We begin with the raw amino-acid sequence, 415 residues long: Leucine-rich repeat-containing protein 34 (415 aa).

LRR repeat units lie at residues 246–272 (SLRYLDVSCNKITRDGMVFLADVLKSN) and 274–296 (TLEVLDLSFNRIETAGAKYLSET).

Interacts with NPM1 and NCL. As to expression, expressed in testis where it specifically localizes to germ cells (at protein level). Not detected in other tissues tested (at protein level). Expressed in pluripotent embryonic stem cells and multipotent adult germline stem cells.

The protein resides in the nucleus. It is found in the nucleolus. The protein localises to the cytoplasm. Highly expressed in stem cells where it may be involved in regulation of pluripotency. In embryonic stem cells (ESCs), important for normal expression of the pluripotency regulators POU5F1/OCT4 and KLF4. Also important for expression of the ectodermal marker gene NES and the endodermal marker gene GATA4. Promotes stem cell proliferation in vitro. The sequence is that of Leucine-rich repeat-containing protein 34 from Mus musculus (Mouse).